A 284-amino-acid chain; its full sequence is Phosphoenolpyruvate guanylyltransferase (284 aa).

The interval 94–123 is disordered; that stretch reads ADLSADEPAGTDAERRADPSAENRASTSAQ. Over residues 105 to 114 the composition is skewed to basic and acidic residues; sequence DAERRADPSA. Phosphoenolpyruvate-binding residues include threonine 203, glycine 219, and serine 222.

The protein belongs to the CofC family.

It carries out the reaction phosphoenolpyruvate + GTP + H(+) = enolpyruvoyl-2-diphospho-5'-guanosine + diphosphate. It functions in the pathway cofactor biosynthesis; coenzyme F420 biosynthesis. Guanylyltransferase that catalyzes the activation of phosphoenolpyruvate (PEP) as enolpyruvoyl-2-diphospho-5'-guanosine, via the condensation of PEP with GTP. It is involved in the biosynthesis of coenzyme F420, a hydride carrier cofactor. The protein is Phosphoenolpyruvate guanylyltransferase of Sanguibacter keddieii (strain ATCC 51767 / DSM 10542 / NCFB 3025 / ST-74).